The sequence spans 403 residues: Multifunctional CCA protein (403 aa).

Residues glycine 8 and arginine 11 each coordinate ATP. Positions 8 and 11 each coordinate CTP. Residues aspartate 21 and aspartate 23 each contribute to the Mg(2+) site. ATP contacts are provided by arginine 91, arginine 137, and arginine 140. Residues arginine 91, arginine 137, and arginine 140 each coordinate CTP. Residues 228–329 form the HD domain; the sequence is TGIHTLMVAK…LKVLGLLDVW (102 aa).

This sequence belongs to the tRNA nucleotidyltransferase/poly(A) polymerase family. Bacterial CCA-adding enzyme type 1 subfamily. In terms of assembly, monomer. Can also form homodimers and oligomers. It depends on Mg(2+) as a cofactor. Requires Ni(2+) as cofactor.

The enzyme catalyses a tRNA precursor + 2 CTP + ATP = a tRNA with a 3' CCA end + 3 diphosphate. The catalysed reaction is a tRNA with a 3' CCA end + 2 CTP + ATP = a tRNA with a 3' CCACCA end + 3 diphosphate. Catalyzes the addition and repair of the essential 3'-terminal CCA sequence in tRNAs without using a nucleic acid template. Adds these three nucleotides in the order of C, C, and A to the tRNA nucleotide-73, using CTP and ATP as substrates and producing inorganic pyrophosphate. tRNA 3'-terminal CCA addition is required both for tRNA processing and repair. Also involved in tRNA surveillance by mediating tandem CCA addition to generate a CCACCA at the 3' terminus of unstable tRNAs. While stable tRNAs receive only 3'-terminal CCA, unstable tRNAs are marked with CCACCA and rapidly degraded. This Vibrio cholerae serotype O1 (strain ATCC 39541 / Classical Ogawa 395 / O395) protein is Multifunctional CCA protein.